Here is an 842-residue protein sequence, read N- to C-terminus: Xyloglucanase Xgh74A (842 aa).

Positions 1–32 (MVKKFTSKIKAAVFAAVVAATAIFGPAISSQA) are cleaved as a signal peptide. Residue Asp70 is the Nucleophile of the active site. BNR repeat units lie at residues 134 to 144 (RSTDRGETWEK), 185 to 196 (WRSTDYGVTWSK), 252 to 262 (YRSTDGGVTWK), and 358 to 368 (FRSTDGGATWK). The active-site Proton donor is Asp480. 5 BNR repeats span residues 533–541 (FSYDGGRNW), 577–586 (VTTDNGNSWK), 616–626 (YISTDGGLTFT), 660–671 (WRSTDGGYTFEK), and 708–718 (FRSDDAGKTWV). Residues 771-841 (DKGLVGDLNG…LLQAIPELPK (71 aa)) enclose the Dockerin domain.

Belongs to the glycosyl hydrolase 74 family.

Functionally, hydrolyzes the glucosidic bonds of unbranched Glc residues in tamarind seed xyloglucan, producing XXXG, XLXG, XXLG and XLLG. Has low activity on carboxymethylcellulose, lichenan,hydroxyethylcellulose and glucuronoxylan, and no activity on xylan, polygalaturonic acid, wheat arabinoxylan, rhamnogalacturan, curdlan, laminarin, galactomannan, galactan, arabinan and pachyman or amorphous cellulose. The chain is Xyloglucanase Xgh74A from Acetivibrio thermocellus (Hungateiclostridium thermocellum).